A 351-amino-acid chain; its full sequence is Heat-inducible transcription repressor HrcA (351 aa).

Belongs to the HrcA family.

Its function is as follows. Negative regulator of class I heat shock genes (grpE-dnaK-dnaJ and groELS operons). Prevents heat-shock induction of these operons. This Acetivibrio thermocellus (strain ATCC 27405 / DSM 1237 / JCM 9322 / NBRC 103400 / NCIMB 10682 / NRRL B-4536 / VPI 7372) (Clostridium thermocellum) protein is Heat-inducible transcription repressor HrcA.